We begin with the raw amino-acid sequence, 932 residues long: MLSRLFLAQGRFCSSHPWEVIVCTLTLTICMLSMNYFTGLPRICGWNYECAPQVKESSLSSDVLVMCIMRTLAVAYLYLQFTKLRTTGSKYILGIAGLFTIFSSFLFSSAVIHLFGLELTGLNEALPFFLLLIDLTKASALTKFALSSTTQNEVVDNIARGMAILGPTITLDTVVTTLVISIGTMSSIRKMEVFCCFGILSLIANYFVFMTFFPACLSLVLELSNSNKYGRPVWHLGRFAEVLEEEEDRKPNPVVQRVKMIMRTGLVLVHAHSYWLASNDTELMSRDMLYDGNLLTDKKIDPTMPLWEFYATRLWPPTLDYILTAILATVLASHYIFFSDLATYPEKRVSIMEGHEVVNPGSDHEDASEVETIGTLSSSPSTSDVRVIESMTSRTQACQTDPVTASPRNSRSSSPVSSHSVKPARFTIGSSGSGSEDEEEEVIKEEEVEWVLETELKAPRPMPELLEILNVGKGPNALTDDEVQLLVGAKHIPAYKLENILDNPERGVAVRRQIISKLLPITDALEKLPYASYDYSFVSGACCENVIGYMPVPVGVAGPLLLDGQEFQVPMATTEGCLVASTNRGCRALRSAGGIHSVLIGDGMTRGPLVRLPSAQEAGAIKQWLEVPENFAAIKERFESTSRFAKLKSIQTALAGRYMFLRFKALTGDAMGMNMISKGTEQALHALQTMFPNIEIMSLSGNYCTDKKVAAINWIEGRGKSVVCEATVPAHIVQQVLKTSASALVDLNIHKNLVGSAMAGSIGGFNAHAANIVTAIYIATGQDAAQNIASSNCMTLMETRGPKGGDLYLSCTMPSIELGTVGGGTVLPPQSACLQMMDVKGSNIHGSGLNASQLARIVCATVMAGELSLMSALAAGHLVKSHMKHNRSALNIASPLPSIDEVATHRRSKSVDFSALKESSAAAPGTCTANAS.

The next 6 membrane-spanning stretches (helical) occupy residues 20–40 (VIVC…FTGL), 59–79 (LSSD…YLYL), 92–112 (ILGI…SAVI), 113–133 (HLFG…LLLI), 162–182 (MAIL…VISI), and 193–213 (VFCC…MTFF). Asparagine 279 carries N-linked (GlcNAc...) asparagine glycosylation. Residues 322-342 (ILTAILATVLASHYIFFSDLA) form a helical membrane-spanning segment. Positions 343–467 (TYPEKRVSIM…APRPMPELLE (125 aa)) are linker. Residues 357–367 (VVNPGSDHEDA) show a composition bias toward basic and acidic residues. The tract at residues 357–442 (VVNPGSDHED…SGSEDEEEEV (86 aa)) is disordered. Residues 374–403 (GTLSSSPSTSDVRVIESMTSRTQACQTDPV) show a composition bias toward polar residues. The segment covering 406-421 (SPRNSRSSSPVSSHSV) has biased composition (low complexity). Residues 468–932 (ILNVGKGPNA…APGTCTANAS (465 aa)) form a catalytic region. Residues glutamate 575, lysine 707, and aspartate 783 each act as charge relay system in the active site. N-linked (GlcNAc...) asparagine glycosylation is present at asparagine 850. Histidine 882 (proton donor) is an active-site residue. The N-linked (GlcNAc...) asparagine glycan is linked to asparagine 886. A Phosphoserine; by AMPK modification is found at serine 888.

The protein belongs to the HMG-CoA reductase family.

The protein localises to the endoplasmic reticulum membrane. The enzyme catalyses (R)-mevalonate + 2 NADP(+) + CoA = (3S)-3-hydroxy-3-methylglutaryl-CoA + 2 NADPH + 2 H(+). It functions in the pathway metabolic intermediate biosynthesis; (R)-mevalonate biosynthesis; (R)-mevalonate from acetyl-CoA: step 3/3. In terms of biological role, this transmembrane glycoprotein is involved in the control of cholesterol biosynthesis. It is the rate-limiting enzyme of sterol biosynthesis. The chain is 3-hydroxy-3-methylglutaryl-coenzyme A reductase (HMGCR) from Strongylocentrotus purpuratus (Purple sea urchin).